The following is a 590-amino-acid chain: Fucose-1-phosphate guanylyltransferase (590 aa).

Expressed at highest levels in brain, moderately in testis, ovary and kidney, and weakly in liver, spleen, heart and lung.

Its subcellular location is the cytoplasm. It catalyses the reaction beta-L-fucose 1-phosphate + GTP + H(+) = GDP-beta-L-fucose + diphosphate. In terms of biological role, catalyzes the formation of GDP-L-fucose from GTP and L-fucose-1-phosphate. Functions as a salvage pathway to reutilize L-fucose arising from the turnover of glycoproteins and glycolipids. The protein is Fucose-1-phosphate guanylyltransferase of Mus musculus (Mouse).